Consider the following 387-residue polypeptide: S-adenosylmethionine synthase (387 aa).

H17 lines the ATP pocket. Mg(2+) is bound at residue D19. E45 is a K(+) binding site. The L-methionine site is built by E58 and Q101. The tract at residues Q101 to R111 is flexible loop. ATP is bound by residues D168–K170, R234–F235, D243, R249–K250, A266, and K270. D243 contributes to the L-methionine binding site. K274 is a binding site for L-methionine.

The protein belongs to the AdoMet synthase family. In terms of assembly, homotetramer; dimer of dimers. Requires Mg(2+) as cofactor. It depends on K(+) as a cofactor.

It localises to the cytoplasm. The catalysed reaction is L-methionine + ATP + H2O = S-adenosyl-L-methionine + phosphate + diphosphate. It participates in amino-acid biosynthesis; S-adenosyl-L-methionine biosynthesis; S-adenosyl-L-methionine from L-methionine: step 1/1. In terms of biological role, catalyzes the formation of S-adenosylmethionine (AdoMet) from methionine and ATP. The overall synthetic reaction is composed of two sequential steps, AdoMet formation and the subsequent tripolyphosphate hydrolysis which occurs prior to release of AdoMet from the enzyme. This is S-adenosylmethionine synthase from Bordetella bronchiseptica (strain ATCC BAA-588 / NCTC 13252 / RB50) (Alcaligenes bronchisepticus).